The primary structure comprises 304 residues: Cell surface-binding protein OPG105 (304 aa).

The protein belongs to the alpha-carbonic anhydrase family. As to quaternary structure, homodimer; disulfide-linked. In terms of processing, apparently non-glycosylated.

The protein localises to the virion membrane. Binds to chondroitin sulfate on the cell surface to provide virion attachment to target cell. The sequence is that of Cell surface-binding protein OPG105 (OPG105) from Monkeypox virus.